The following is a 256-amino-acid chain: Probable hydroxyacylglutathione hydrolase SPCC13B11.03c (256 aa).

Residues histidine 63, histidine 65, aspartate 67, histidine 68, histidine 118, and aspartate 139 each coordinate Zn(2+). Residues 148–150, 178–180, and 250–253 each bind substrate; these read RFF, HEY, and RTLK. Residue histidine 178 coordinates Zn(2+).

The protein belongs to the metallo-beta-lactamase superfamily. Glyoxalase II family. Zn(2+) serves as cofactor.

Its subcellular location is the cytoplasm. The protein localises to the nucleus. The enzyme catalyses an S-(2-hydroxyacyl)glutathione + H2O = a 2-hydroxy carboxylate + glutathione + H(+). It carries out the reaction (R)-S-lactoylglutathione + H2O = (R)-lactate + glutathione + H(+). The protein operates within secondary metabolite metabolism; methylglyoxal degradation; (R)-lactate from methylglyoxal: step 2/2. Its function is as follows. Thiolesterase that catalyzes the hydrolysis of S-D-lactoylglutathione to form glutathione and D-lactic acid. Involved in the metabolism of methylglyoxal, a toxic compound for yeast proliferation, by converting methylglyoxal to lactate via S-D-lactoylglutathione by sequential enzyme reactions catalyzed by glyoxalase I and glyoxalase II. In Schizosaccharomyces pombe (strain 972 / ATCC 24843) (Fission yeast), this protein is Probable hydroxyacylglutathione hydrolase SPCC13B11.03c.